A 467-amino-acid polypeptide reads, in one-letter code: UDP-N-acetylmuramate--L-alanine ligase (467 aa).

An ATP-binding site is contributed by Gly-114–Thr-120.

This sequence belongs to the MurCDEF family.

It is found in the cytoplasm. The catalysed reaction is UDP-N-acetyl-alpha-D-muramate + L-alanine + ATP = UDP-N-acetyl-alpha-D-muramoyl-L-alanine + ADP + phosphate + H(+). It functions in the pathway cell wall biogenesis; peptidoglycan biosynthesis. Its function is as follows. Cell wall formation. The chain is UDP-N-acetylmuramate--L-alanine ligase from Nitrobacter winogradskyi (strain ATCC 25391 / DSM 10237 / CIP 104748 / NCIMB 11846 / Nb-255).